The following is a 440-amino-acid chain: 5-hydroxytryptamine receptor 6 (440 aa).

Residues 1-27 are Extracellular-facing; the sequence is MVPEPGPTANSTPAWGAGPPSAPGGSG. A helical transmembrane segment spans residues 28–52; it reads WVAAALCVVIALTAAANSLLIALIC. The Cytoplasmic segment spans residues 53 to 62; it reads TQPALRNTSN. A helical membrane pass occupies residues 63 to 88; it reads FFLVSLFTSDLMVGLVVMPPAMLNAL. The Extracellular portion of the chain corresponds to 89 to 96; it reads YGRWVLAR. Residues 97-122 traverse the membrane as a helical segment; sequence GLCLLWTAFDVMCCSASILNLCLISL. Cys-99 and Cys-180 are disulfide-bonded. A serotonin-binding site is contributed by Asp-106. Topologically, residues 123 to 142 are cytoplasmic; sequence DRYLLILSPLRYKLRMTPLR. A helical membrane pass occupies residues 143–167; that stretch reads ALALVLGAWSLAALASFLPLLLGWH. Topologically, residues 168–185 are extracellular; sequence ELGHARPPVPGQCRLLAS. A helical membrane pass occupies residues 186-209; that stretch reads LPFVLVASGLTFFLPSGAICFTYC. Over 210 to 266 the chain is Cytoplasmic; it reads RILLAARKQAVQVASLTTGMASQASETLQVPRTPRPGVESADSRRLATKHSRKALKA. A helical membrane pass occupies residues 267–293; it reads SLTLGILLGMFFVTWLPFFVANIVQAV. A serotonin-binding site is contributed by Asn-288. Residues 294 to 299 lie on the Extracellular side of the membrane; sequence CDCISP. The helical transmembrane segment at 300–323 threads the bilayer; it reads GLFDVLTWLGYCNSTMNPIIYPLF. Residues 324–440 are Cytoplasmic-facing; that stretch reads MRDFKRALGR…RPHPLGIPTN (117 aa). Positions 346 to 392 are disordered; that stretch reads ASLASPSLRTSHSGPRPGLSLQQVLPLPLPPDSDSDSDAGSGGSSGL. The span at 347–358 shows a compositional bias: polar residues; sequence SLASPSLRTSHS. Residues 362–371 show a composition bias toward low complexity; sequence PGLSLQQVLP.

This sequence belongs to the G-protein coupled receptor 1 family. As to quaternary structure, interacts with MTOR, RPTOR and NF1. Interacts with CDK5. Expressed in several human brain regions, most prominently in the caudate nucleus.

Its subcellular location is the cell membrane. G-protein coupled receptor for 5-hydroxytryptamine (serotonin), a biogenic hormone that functions as a neurotransmitter, a hormone and a mitogen. Also has a high affinity for tricyclic psychotropic drugs. Ligand binding causes a conformation change that triggers signaling via guanine nucleotide-binding proteins (G proteins) and modulates the activity of downstream effectors. HTR6 is coupled to G(s) G alpha proteins and mediates activation of adenylate cyclase activity. Controls pyramidal neurons migration during corticogenesis, through the regulation of CDK5 activity. Is an activator of mTOR signaling. The sequence is that of 5-hydroxytryptamine receptor 6 from Homo sapiens (Human).